The sequence spans 105 residues: uncharacterized protein (105 aa).

The span at 31-47 shows a compositional bias: low complexity; it reads SVNLPSPSVKPSVTPSV. Positions 31-80 are disordered; the sequence is SVNLPSPSVKPSVTPSVKKPPHVIRSDYSKPREKPAKVAKKPTVKNDKKP. Basic and acidic residues predominate over residues 54–66; it reads IRSDYSKPREKPA.

This is an uncharacterized protein from Caenorhabditis elegans.